We begin with the raw amino-acid sequence, 190 residues long: Nuclear transcription factor Y subunit A-7 (190 aa).

The disordered stretch occupies residues 1 to 33; it reads MTSSIHELSDNIGSHEKQEQRDSHFQPPIPSAR. A compositionally biased stretch (basic and acidic residues) spans 7-24; it reads ELSDNIGSHEKQEQRDSH. The Subunit association domain (SAD) motif lies at 103–126; the sequence is FVNAKQYHGILRRRQSRARLESQN. Residues 133–158 constitute a DNA-binding region (NFYA/HAP2-type); that stretch reads KPYLHESRHLHAIRRPRGCGGRFLNA. A disordered region spans residues 147–190; sequence RPRGCGGRFLNAKKEDEHHEDSSHEEKSNLSAGKSAMAASSGTS. Over residues 158 to 174 the composition is skewed to basic and acidic residues; the sequence is AKKEDEHHEDSSHEEKS. Over residues 177-190 the composition is skewed to low complexity; sequence SAGKSAMAASSGTS.

The protein belongs to the NFYA/HAP2 subunit family. As to quaternary structure, heterotrimeric transcription factor composed of three components, NF-YA, NF-YB and NF-YC. NF-YB and NF-YC must interact and dimerize for NF-YA association and DNA binding.

The protein localises to the nucleus. Stimulates the transcription of various genes by recognizing and binding to a CCAAT motif in promoters. The protein is Nuclear transcription factor Y subunit A-7 (NFYA7) of Arabidopsis thaliana (Mouse-ear cress).